A 134-amino-acid chain; its full sequence is Lymphocyte antigen 6S (134 aa).

A signal peptide spans 1–26; it reads MSSLQAMKTLSLVLLVALLSMERAQG. A UPAR/Ly6 domain is found at 28 to 76; that stretch reads RCYRCLAVLEGASCSVVSCPFLDGVCVSQKVSVFGSKVRGENKLSLLSC. Disulfide bonds link Cys-29-Cys-53, Cys-32-Cys-41, Cys-76-Cys-98, and Cys-99-Cys-104. Asn-105 carries the GPI-anchor amidated asparagine lipid modification. A propeptide spans 106–134 (removed in mature form); sequence AVVLAASSPWALCVQLLLSLGSVFLWALL.

The protein resides in the cell membrane. The protein is Lymphocyte antigen 6S of Homo sapiens (Human).